Consider the following 688-residue polypeptide: Glycine--tRNA ligase beta subunit (688 aa).

It belongs to the class-II aminoacyl-tRNA synthetase family. Tetramer of two alpha and two beta subunits.

The protein localises to the cytoplasm. It catalyses the reaction tRNA(Gly) + glycine + ATP = glycyl-tRNA(Gly) + AMP + diphosphate. This Listeria monocytogenes serotype 4b (strain CLIP80459) protein is Glycine--tRNA ligase beta subunit.